Reading from the N-terminus, the 74-residue chain is Cytochrome c oxidase subunit 6C (74 aa).

Over 2–12 (STALAKPQMRG) the chain is Mitochondrial matrix. Residues 13 to 53 (LLARRLRFHIVGAFMVSLGFATFYKFAVAEKRKKAYADFYR) traverse the membrane as a helical segment. At 54–74 (NYDSMKDFEEMRKAGIFQSAK) the chain is on the mitochondrial intermembrane side.

The protein belongs to the cytochrome c oxidase subunit 6c family. As to quaternary structure, component of the cytochrome c oxidase (complex IV, CIV), a multisubunit enzyme composed of 14 subunits. The complex is composed of a catalytic core of 3 subunits MT-CO1, MT-CO2 and MT-CO3, encoded in the mitochondrial DNA, and 11 supernumerary subunits COX4I1 (or COX4I2), COX5A, COX5B, COX6A2 (or COX6A1), COX6B1 (or COX6B2), COX6C, COX7A1 (or COX7A2), COX7B, COX7C, COX8B and NDUFA4, which are encoded in the nuclear genome. The complex exists as a monomer or a dimer and forms supercomplexes (SCs) in the inner mitochondrial membrane with NADH-ubiquinone oxidoreductase (complex I, CI) and ubiquinol-cytochrome c oxidoreductase (cytochrome b-c1 complex, complex III, CIII), resulting in different assemblies (supercomplex SCI(1)III(2)IV(1) and megacomplex MCI(2)III(2)IV(2)).

The protein localises to the mitochondrion inner membrane. It functions in the pathway energy metabolism; oxidative phosphorylation. Functionally, component of the cytochrome c oxidase, the last enzyme in the mitochondrial electron transport chain which drives oxidative phosphorylation. The respiratory chain contains 3 multisubunit complexes succinate dehydrogenase (complex II, CII), ubiquinol-cytochrome c oxidoreductase (cytochrome b-c1 complex, complex III, CIII) and cytochrome c oxidase (complex IV, CIV), that cooperate to transfer electrons derived from NADH and succinate to molecular oxygen, creating an electrochemical gradient over the inner membrane that drives transmembrane transport and the ATP synthase. Cytochrome c oxidase is the component of the respiratory chain that catalyzes the reduction of oxygen to water. Electrons originating from reduced cytochrome c in the intermembrane space (IMS) are transferred via the dinuclear copper A center (CU(A)) of subunit 2 and heme A of subunit 1 to the active site in subunit 1, a binuclear center (BNC) formed by heme A3 and copper B (CU(B)). The BNC reduces molecular oxygen to 2 water molecules using 4 electrons from cytochrome c in the IMS and 4 protons from the mitochondrial matrix. The chain is Cytochrome c oxidase subunit 6C (COX6C) from Bos taurus (Bovine).